A 332-amino-acid chain; its full sequence is DNA-directed RNA polymerase subunit alpha (332 aa).

An alpha N-terminal domain (alpha-NTD) region spans residues 1–227 (MKKFAETPFL…VMYSQMSVFN (227 aa)). The segment at 248 to 332 (KELVIRIDDL…LRRKLEQLKA (85 aa)) is alpha C-terminal domain (alpha-CTD).

This sequence belongs to the RNA polymerase alpha chain family. As to quaternary structure, homodimer. The RNAP catalytic core consists of 2 alpha, 1 beta, 1 beta' and 1 omega subunit. When a sigma factor is associated with the core the holoenzyme is formed, which can initiate transcription.

The enzyme catalyses RNA(n) + a ribonucleoside 5'-triphosphate = RNA(n+1) + diphosphate. In terms of biological role, DNA-dependent RNA polymerase catalyzes the transcription of DNA into RNA using the four ribonucleoside triphosphates as substrates. This is DNA-directed RNA polymerase subunit alpha from Aliarcobacter butzleri (strain RM4018) (Arcobacter butzleri).